Reading from the N-terminus, the 468-residue chain is Glutamate--tRNA ligase (468 aa).

The short motif at 8 to 18 is the 'HIGH' region element; that stretch reads PSPTGFLHVGG. Cys97, Cys99, Cys124, and Asp126 together coordinate Zn(2+). Residues 236–240 carry the 'KMSKS' region motif; it reads KLSKR. Lys239 contributes to the ATP binding site.

Belongs to the class-I aminoacyl-tRNA synthetase family. Glutamate--tRNA ligase type 1 subfamily. In terms of assembly, monomer. Zn(2+) is required as a cofactor.

Its subcellular location is the cytoplasm. It carries out the reaction tRNA(Glu) + L-glutamate + ATP = L-glutamyl-tRNA(Glu) + AMP + diphosphate. Its function is as follows. Catalyzes the attachment of glutamate to tRNA(Glu) in a two-step reaction: glutamate is first activated by ATP to form Glu-AMP and then transferred to the acceptor end of tRNA(Glu). The polypeptide is Glutamate--tRNA ligase (Francisella tularensis subsp. tularensis (strain SCHU S4 / Schu 4)).